Consider the following 79-residue polypeptide: UPF0291 protein SAV1341 (79 aa).

Positions 56–79 are disordered; that stretch reads IDPEGNDVTPEKIKEIQQKRDNKN. A compositionally biased stretch (basic and acidic residues) spans 64–79; that stretch reads TPEKIKEIQQKRDNKN.

It belongs to the UPF0291 family.

Its subcellular location is the cytoplasm. This is UPF0291 protein SAV1341 from Staphylococcus aureus (strain Mu50 / ATCC 700699).